The sequence spans 262 residues: Tetratricopeptide repeat protein 33 (262 aa).

3 TPR repeats span residues 59–92, 93–126, and 127–160; these read SKQL…TPND, ATLY…NPHS, and WESW…YPMN. Ser197 is modified (phosphoserine). Residue Thr251 is modified to Phosphothreonine.

The chain is Tetratricopeptide repeat protein 33 (TTC33) from Homo sapiens (Human).